A 351-amino-acid chain; its full sequence is Tryptophan--tRNA ligase (351 aa).

ATP contacts are provided by residues 11 to 13 and 19 to 20; these read RPT and GH. The 'HIGH' region signature appears at 12-20; the sequence is PTGALHLGH. Aspartate 139 is a binding site for L-tryptophan. ATP is bound by residues 151–153, leucine 190, and 198–202; these read GRD and KMSKS. Residues 198–202 carry the 'KMSKS' region motif; it reads KMSKS.

It belongs to the class-I aminoacyl-tRNA synthetase family. Homodimer.

The protein resides in the cytoplasm. The catalysed reaction is tRNA(Trp) + L-tryptophan + ATP = L-tryptophyl-tRNA(Trp) + AMP + diphosphate + H(+). In terms of biological role, catalyzes the attachment of tryptophan to tRNA(Trp). The chain is Tryptophan--tRNA ligase from Borreliella burgdorferi (strain ATCC 35210 / DSM 4680 / CIP 102532 / B31) (Borrelia burgdorferi).